The chain runs to 324 residues: Ribosomal RNA small subunit methyltransferase H (324 aa).

Residues 47 to 49 (GGH), D67, L96, D115, and Q122 contribute to the S-adenosyl-L-methionine site.

Belongs to the methyltransferase superfamily. RsmH family.

It localises to the cytoplasm. It carries out the reaction cytidine(1402) in 16S rRNA + S-adenosyl-L-methionine = N(4)-methylcytidine(1402) in 16S rRNA + S-adenosyl-L-homocysteine + H(+). In terms of biological role, specifically methylates the N4 position of cytidine in position 1402 (C1402) of 16S rRNA. The polypeptide is Ribosomal RNA small subunit methyltransferase H (Halorhodospira halophila (strain DSM 244 / SL1) (Ectothiorhodospira halophila (strain DSM 244 / SL1))).